The chain runs to 212 residues: Ras-related protein Rab-15 (212 aa).

Residues serine 17, glycine 18, valine 19, glycine 20, lysine 21, threonine 22, cysteine 23, serine 35, serine 39, and threonine 40 each coordinate GTP. A Mg(2+)-binding site is contributed by threonine 22. 2 consecutive short sequence motifs (switch) follow at residues 31 to 45 and 63 to 80; these read NEFH…GVDF and DTAG…YYRR. 2 residues coordinate Mg(2+): threonine 40 and aspartate 63. Residues glycine 66, asparagine 121, lysine 122, aspartate 124, serine 151, and alanine 152 each contribute to the GTP site. Positions 192-212 are disordered; it reads ELEEDEGKPEGPANSSKTCWC. S-geranylgeranyl cysteine attachment occurs at residues cysteine 210 and cysteine 212. Cysteine 212 is modified (cysteine methyl ester).

This sequence belongs to the small GTPase superfamily. Rab family. As to quaternary structure, the GTP bound form of RAB15 interacts with REP15. Interacts (GTP-bound form) with MICAL1, MICAL3, MICALCL, EHBP1 and EHBP1L1. Requires Mg(2+) as cofactor.

It localises to the cell membrane. The catalysed reaction is GTP + H2O = GDP + phosphate + H(+). Regulated by guanine nucleotide exchange factors (GEFs) which promote the exchange of bound GDP for free GTP. Regulated by GTPase activating proteins (GAPs) which increase the GTP hydrolysis activity. Inhibited by GDP dissociation inhibitors (GDIs). In terms of biological role, the small GTPases Rab are key regulators of intracellular membrane trafficking, from the formation of transport vesicles to their fusion with membranes. Rabs cycle between an inactive GDP-bound form and an active GTP-bound form that is able to recruit to membranes different sets of downstream effectors directly responsible for vesicle formation, movement, tethering and fusion. RAB15 may act in concert with RAB3A in regulating aspects of synaptic vesicle membrane flow within the nerve terminal. This is Ras-related protein Rab-15 from Mus musculus (Mouse).